A 376-amino-acid polypeptide reads, in one-letter code: Queuine tRNA-ribosyltransferase (376 aa).

The Proton acceptor role is filled by Asp-93. Substrate contacts are provided by residues 93–97, Asp-147, Gln-191, and Gly-218; that span reads DSGGF. An RNA binding region spans residues 249-255; it reads GVGKPED. Asp-268 functions as the Nucleophile in the catalytic mechanism. Residues 273-277 form an RNA binding; important for wobble base 34 recognition region; it reads TRNAR. Positions 306, 308, 311, and 337 each coordinate Zn(2+).

The protein belongs to the queuine tRNA-ribosyltransferase family. As to quaternary structure, homodimer. Within each dimer, one monomer is responsible for RNA recognition and catalysis, while the other monomer binds to the replacement base PreQ1. Zn(2+) serves as cofactor.

It carries out the reaction 7-aminomethyl-7-carbaguanine + guanosine(34) in tRNA = 7-aminomethyl-7-carbaguanosine(34) in tRNA + guanine. Its pathway is tRNA modification; tRNA-queuosine biosynthesis. Catalyzes the base-exchange of a guanine (G) residue with the queuine precursor 7-aminomethyl-7-deazaguanine (PreQ1) at position 34 (anticodon wobble position) in tRNAs with GU(N) anticodons (tRNA-Asp, -Asn, -His and -Tyr). Catalysis occurs through a double-displacement mechanism. The nucleophile active site attacks the C1' of nucleotide 34 to detach the guanine base from the RNA, forming a covalent enzyme-RNA intermediate. The proton acceptor active site deprotonates the incoming PreQ1, allowing a nucleophilic attack on the C1' of the ribose to form the product. After dissociation, two additional enzymatic reactions on the tRNA convert PreQ1 to queuine (Q), resulting in the hypermodified nucleoside queuosine (7-(((4,5-cis-dihydroxy-2-cyclopenten-1-yl)amino)methyl)-7-deazaguanosine). The polypeptide is Queuine tRNA-ribosyltransferase (Histophilus somni (strain 129Pt) (Haemophilus somnus)).